The primary structure comprises 348 residues: Inositol 2-dehydrogenase/D-chiro-inositol 3-dehydrogenase (348 aa).

This sequence belongs to the Gfo/Idh/MocA family. As to quaternary structure, homotetramer.

The catalysed reaction is myo-inositol + NAD(+) = scyllo-inosose + NADH + H(+). It catalyses the reaction 1D-chiro-inositol + NAD(+) = scyllo-inosine + NADH + H(+). The protein operates within polyol metabolism; myo-inositol degradation into acetyl-CoA; acetyl-CoA from myo-inositol: step 1/7. Involved in the oxidation of myo-inositol (MI) and D-chiro-inositol (DCI) to 2-keto-myo-inositol (2KMI or 2-inosose) and 1-keto-D-chiro-inositol (1KDCI), respectively. This Halalkalibacterium halodurans (strain ATCC BAA-125 / DSM 18197 / FERM 7344 / JCM 9153 / C-125) (Bacillus halodurans) protein is Inositol 2-dehydrogenase/D-chiro-inositol 3-dehydrogenase.